Reading from the N-terminus, the 27-residue chain is Toxin TdII-4 (27 aa).

One can recognise an LCN-type CS-alpha/beta domain in the interval 1 to 27 (KDGYLMEPNGCKLGCLTRPAKYCWXEE).

It belongs to the long (4 C-C) scorpion toxin superfamily. Sodium channel inhibitor family. Beta subfamily. As to expression, expressed by the venom gland.

It localises to the secreted. Beta toxins bind voltage-independently at site-4 of sodium channels (Nav) and shift the voltage of activation toward more negative potentials thereby affecting sodium channel activation and promoting spontaneous and repetitive firing. This toxin is active against mammals and also affects neuromuscular preparations of frog. This Tityus discrepans (Venezuelan scorpion) protein is Toxin TdII-4.